The primary structure comprises 1454 residues: Beta-1,3-glucan-binding protein (1454 aa).

The propeptide occupies 1–197 (MSFDLTTPFD…KRSLEMRMMN (197 aa)). Residues Asn33, Asn55, Asn185, Asn571, Asn592, Asn825, Asn882, and Asn1153 are each glycosylated (N-linked (GlcNAc...) asparagine).

This sequence belongs to the glycosyl hydrolase 16 family. In terms of assembly, monomer. As to expression, expressed in the hepatopancreas and secreted into the hemolymph. Expressed at lower levels in muscle, pleopod and gill tissue.

The protein resides in the secreted. Involved in the recognition of invading microorganisms. Binds specifically to beta-1,3-glucan and activates the prophenoloxidase cascade. The chain is Beta-1,3-glucan-binding protein from Penaeus vannamei (Whiteleg shrimp).